Reading from the N-terminus, the 286-residue chain is Short-chain dehydrogenase fogD (286 aa).

Residues Val8, Thr34, Asp55, Tyr147, Lys151, Val180, and Thr182 each coordinate NADP(+). The Proton acceptor role is filled by Tyr147. Residue Lys151 is the Lowers pKa of active site Tyr of the active site.

Belongs to the short-chain dehydrogenases/reductases (SDR) family.

Its pathway is secondary metabolite biosynthesis. In terms of biological role, short-chain dehydrogenase; part of the gene cluster that mediates the biosynthesis of flavoglaucin and congeners (including aspergin, dihydroauroglaucin and auroglaucin), prenylated salicylaldehyde derivatives carrying a saturated or an unsaturated C-7 side chain. The PKS fogA releases the carboxylic acid (8E,10E,12E)-3,5,7-trihydroxytetradeca-8,10,12-trienoic acid as its product, as well as derivatives with one and two double bonds. FogA is indeed able to reduce the initial triketide, thus being at least partially responsible for the differently saturated heptyl side chains of flavoglaucin congeners. The oxidoreductases fogB, fogC and fogD modify the nascent polyketide in fogA-bound form and, together, fogA, fogB, fogC and fogD are necessary for the formation of the aromatic core and the cyclized PKS products are released as salicyl alcohols. In particular, fogB is responsible for oxidation of a hydroxyl group or reduction of remaining double bond(s) at the C-7 residue whereas fogD is probably involved in the reductive release of the modified PKS products. The cytochrome P450 monooxygenase fogE is then responsible for the hydroxylation at C-3 of the benzene ring. The fogE products are substrates of the prenyltransferase fogH and the prenylated benzyl alcohols are subsequently oxidized by the fogF to produce the final aryl aldehydes flavoglaucin and congeners. The short-chain dehydrogenase fogG does not seem to be involved in the biosynthesis of the prenylated salicylaldehyde derivatives. The chain is Short-chain dehydrogenase fogD from Aspergillus ruber (strain CBS 135680).